We begin with the raw amino-acid sequence, 841 residues long: Homeobox-leucine zipper protein ATHB-9 (841 aa).

Residues 1-18 (MMAHHSMDDRDSPDKGFD) show a composition bias toward basic and acidic residues. Residues 1-21 (MMAHHSMDDRDSPDKGFDSGK) are disordered. A DNA-binding region (homeobox) is located at residues 18 to 81 (DSGKYVRYTP…NRRCREKQRK (64 aa)). A coiled-coil region spans residues 85 to 118 (RLQTVNRKLSAMNKLLMEENDRLQKQVSNLVYEN). Disordered stretches follow at residues 140–162 (VVVSGQQRQQQNPTHQHPQRDVN) and 602–630 (DQKTNPNDHQSASRTRDLASSLDGSTKTD). A compositionally biased stretch (low complexity) spans 145-155 (QQRQQQNPTHQ). Residues 160–388 (DVNNPANLLS…IAQETSGEVQ (229 aa)) enclose the START domain. Polar residues predominate over residues 603 to 614 (QKTNPNDHQSAS).

The protein belongs to the HD-ZIP homeobox family. Class III subfamily. In terms of assembly, binds DNA as homodimer. Interacts with ESR1 and ESR2. Interacts with ZPR3.

It localises to the nucleus. Probable transcription factor involved in the determination of adaxial-abaxial polarity in ovule primordium. Specifies adaxial leaf fates. Binds to the DNA sequence 5'-GTAAT[GC]ATTAC-3'. The polypeptide is Homeobox-leucine zipper protein ATHB-9 (ATHB-9) (Arabidopsis thaliana (Mouse-ear cress)).